Reading from the N-terminus, the 232-residue chain is Flagellar L-ring protein (232 aa).

A signal peptide spans 1–21 (MQKNAAHTYAISSLLVLSLTG). The N-palmitoyl cysteine moiety is linked to residue C22. C22 carries S-diacylglycerol cysteine lipidation.

It belongs to the FlgH family. In terms of assembly, the basal body constitutes a major portion of the flagellar organelle and consists of four rings (L,P,S, and M) mounted on a central rod.

The protein localises to the cell outer membrane. It is found in the bacterial flagellum basal body. Functionally, assembles around the rod to form the L-ring and probably protects the motor/basal body from shearing forces during rotation. The polypeptide is Flagellar L-ring protein (Escherichia coli O6:H1 (strain CFT073 / ATCC 700928 / UPEC)).